A 451-amino-acid polypeptide reads, in one-letter code: UDP-N-acetylmuramoylalanine--D-glutamate ligase (451 aa).

120–126 (GSNGKTT) is an ATP binding site.

The protein belongs to the MurCDEF family.

It is found in the cytoplasm. The enzyme catalyses UDP-N-acetyl-alpha-D-muramoyl-L-alanine + D-glutamate + ATP = UDP-N-acetyl-alpha-D-muramoyl-L-alanyl-D-glutamate + ADP + phosphate + H(+). Its pathway is cell wall biogenesis; peptidoglycan biosynthesis. Functionally, cell wall formation. Catalyzes the addition of glutamate to the nucleotide precursor UDP-N-acetylmuramoyl-L-alanine (UMA). This chain is UDP-N-acetylmuramoylalanine--D-glutamate ligase, found in Bacillus pumilus (strain SAFR-032).